The following is a 623-amino-acid chain: uncharacterized protein (623 aa).

Residues 157 to 166 (LNESPLRDQQ) are compositionally biased toward basic and acidic residues. Residues 157-237 (LNESPLRDQQ…QGLPDHNNSI (81 aa)) form a disordered region. Positions 167 to 177 (ESSTPSKNSTL) are enriched in polar residues. Over residues 193–210 (AFRPLPSPSRRSSQSAPA) the composition is skewed to low complexity.

This is an uncharacterized protein from Macaca fascicularis (Crab-eating macaque).